Here is a 585-residue protein sequence, read N- to C-terminus: Probable multidrug resistance ABC transporter ATP-binding/permease protein YheI (585 aa).

One can recognise an ABC transmembrane type-1 domain in the interval 19 to 304; sequence YTIAIVLLLA…IGELINVMQR (286 aa). 6 consecutive transmembrane segments (helical) span residues 21–41, 57–77, 127–147, 149–169, 249–269, and 279–299; these read IAIVLLLAVNVIEMFPPKLLG, LLFYIGIFFVLTAAVYIMSYF, AVSLTTGFGILTLVDSTMFMM, IFLTMGFLISWKLTFAAIIPL, VKLLVGASYLIGLGYGAFLVF, and VSFNVYLGMMIWPMFAIGELI. The ABC transporter domain occupies 337–572; that stretch reads IVFSHVSFTY…NGWYREQYER (236 aa). 371-378 serves as a coordination point for ATP; sequence GKTGSGKT.

This sequence belongs to the ABC transporter superfamily. In terms of assembly, heterodimer composed of YheH and YheI.

It localises to the cell membrane. With respect to regulation, inhibited by ortho-vanadate. In terms of biological role, involved in the transport of four structurally unrelated drugs, including doxorubicin and mitoxantrone. Transmembrane domains (TMD) form a pore in the membrane and the ATP-binding domain (NBD) is responsible for energy generation. This chain is Probable multidrug resistance ABC transporter ATP-binding/permease protein YheI (yheI), found in Bacillus subtilis (strain 168).